The chain runs to 594 residues: Glomulin (594 aa).

The residue at position 2 (Ala2) is an N-acetylalanine. Residues 2-553 (AVEELQSIIK…EEIPNMPPEM (552 aa)) form an alpha-helical region with structural similarity to HEAT repeats region. The segment at 300-594 (IDQLPMVLSP…STSEENIGIK (295 aa)) is important for interaction with RBX1.

In terms of assembly, interacts with FKBP4 and FKBP1A. Isoform 1: Interacts with RBX1 (via RING domain). Identified in complexes that contain RBX1 plus one of the cullins CUL1, CUL2, CUL3, and CUL4A. Identified in a SCF complex composed of CUL1, RBX1, SKP1, FBXW7 and GLMN. Component of a SCF-like complex consisting of CUL7, RBX1, SKP1, FBXW8 and GLMN. Interacts with unphosphorylated MET and is released upon MET phosphorylation. Phosphorylated on tyrosine residues. Ubiquitous.

Its function is as follows. Regulatory component of cullin-RING-based SCF (SKP1-Cullin-F-box protein) E3 ubiquitin-protein ligase complexes. Inhibits E3 ubiquitin ligase activity by binding to RBX1 (via RING domain) and inhibiting its interaction with the E2 ubiquitin-conjugating enzyme CDC34. Inhibits RBX1-mediated neddylation of CUL1. Required for normal stability and normal cellular levels of key components of SCF ubiquitin ligase complexes, including FBXW7, RBX1, CUL1, CUL2, CUL3, CUL4A, and thereby contributes to the regulation of CCNE1 and MYC levels. Essential for normal development of the vasculature. Contributes to the regulation of RPS6KB1 phosphorylation. In Homo sapiens (Human), this protein is Glomulin (GLMN).